The chain runs to 70 residues: Turripeptide Gsg9.2 (70 aa).

The signal sequence occupies residues 1 to 20 (MKVYCLLLVLLVGLVSQAHG). The Kazal-like domain maps to 21–70 (QLDKKCQMVCTMDYRPVCGSDGRTYPNKCTLTSTACMSQRSITVFHDGEC). Intrachain disulfides connect Cys-26–Cys-56, Cys-30–Cys-49, and Cys-38–Cys-70.

Belongs to the conopeptide P-like superfamily. As to expression, expressed by the venom duct.

The protein resides in the secreted. Its function is as follows. Acts as a neurotoxin by inhibiting an ion channel. May also act as a serine protease inhibitor, since it possess the kazal serine protease inhibitor signature. The sequence is that of Turripeptide Gsg9.2 from Gemmula sogodensis (Gem-turris).